The chain runs to 358 residues: Oxidase FUB9 (358 aa).

An FMN hydroxy acid dehydrogenase domain is found at 6-350; sequence SSKPQIFSIQ…SPAHLSILNA (345 aa). Position 32 (Tyr-32) interacts with a 2-oxocarboxylate. FMN contacts are provided by Ser-114, Gln-138, and Thr-166. An a 2-oxocarboxylate-binding site is contributed by Arg-175. Lys-221 is an FMN binding site. His-245 (proton acceptor) is an active-site residue. Arg-248 is a binding site for a 2-oxocarboxylate. FMN contacts are provided by residues 276-280 and 299-300; these read DGGFR and GR.

Belongs to the FMN-dependent alpha-hydroxy acid dehydrogenase family. FMN is required as a cofactor.

It participates in mycotoxin biosynthesis. Functionally, oxidase; part of the gene cluster that mediates the biosynthesis of fusaric acid, a mycotoxin with low to moderate toxicity to animals and humans, but with high phytotoxic properties. L-aspartate is suggested as fusaric acid amino acid precursor that is activated and further processed to O-acetyl-L-homoserine by cluster enzymes aspartate kinase FUB3 and homoserine O-acetyltransferase FUB5, as well as enzymes of the primary metabolism. The polyketide synthase (PKS) FUB1 generates the triketide trans-2-hexenal which is presumptively released by the hydrolase FUB4 and linked to the NRPS-bound amino acid precursor by NAD(P)-dependent dehydrogenase FUB6. FUB1, FUB4, and the non-canonical NRPS Fub8 may form an enzyme complex. Further processing of the NRPS-bound intermediate might be carried out by FUB6 and the sulfhydrylase FUB7, enabling a spontaneous electrocyclization to close the carbon backbone of fusaric acid. Dihydrofusaric acid is likely to be released via reduction by the thioester reductase (TR) domain of FUB8 whereupon the final oxidation to fusaric acid may (also) be performed by the FMN-dependent dehydrogenase FUB9. The polypeptide is Oxidase FUB9 (Gibberella fujikuroi (strain CBS 195.34 / IMI 58289 / NRRL A-6831) (Bakanae and foot rot disease fungus)).